We begin with the raw amino-acid sequence, 444 residues long: Transcription factor PIF5 (444 aa).

Residues 26–39 (EDELVELLWRDGQV) form an involved in interaction with phyB region. Disordered regions lie at residues 154–265 (HCGS…NLSE) and 416–444 (MLGF…GKIG). Positions 155–171 (CGSNQSTNIHQATTLPV) are enriched in polar residues. The span at 175–185 (DRSKNVEERLD) shows a compositional bias: basic and acidic residues. A compositionally biased stretch (low complexity) spans 187-197 (SSGGSSGCSYG). Residues 224–244 (ESVSQSDIGLTSTDDQTMGNK) are compositionally biased toward polar residues. Positions 256–265 (RAAEVHNLSE) are enriched in basic and acidic residues. The bHLH domain occupies 256 to 305 (RAAEVHNLSERRRRDRINERMKALQELIPHCSRTDKASILDEAIDYLKSL). The segment covering 424-437 (GPQSQLSAPATTDS) has biased composition (polar residues). S437 is modified (phosphoserine).

As to quaternary structure, homodimer. Interacts specifically with the Pfr form of phytochrome B and with TOC1/APRR1. May form a heterodimer with PIF3. Interacts with PHYB, CRY1 and CRY2 in the nucleus in response to low blue light (LBL). Interacts with TOPP4. Associates to PTAC12/HMR/PAP5 which acts as a transcriptional coactivator. Phosphorylated. Additional phosphorylations induced within 60 seconds following phytochrome B photoactivation. Post-translationally, dephosphorylated by TOPP4 during photomorphogenesis, leading to subsequent degradation of PIF5 by the proteasomal pathway. Mainly expressed in leaves and seedlings, and, to a lower extent, in stems, fruits, flowers and roots.

It is found in the nucleus. In terms of biological role, transcription factor acting negatively in the phytochrome B signaling pathway to promote the shade-avoidance response. Regulates PHYB abundance at the post-transcriptional level, possibly via the ubiquitin-proteasome pathway. Promotes ethylene activity in the dark. May regulate the expression of a subset of genes by binding to the G-box motif. Might be involved in the integration of light-signals to control both circadian and photomorphogenic processes. Activated by CRY1 and CRY2 in response to low blue light (LBL) by direct binding at chromatin on E-box variant 5'-CA[CT]GTG-3' to stimulate specific gene expression to adapt global physiology (e.g. hypocotyl elongation in low blue light). The polypeptide is Transcription factor PIF5 (Arabidopsis thaliana (Mouse-ear cress)).